Here is a 438-residue protein sequence, read N- to C-terminus: tRNA(Ile)-lysidine synthase (438 aa).

Residue serine 26–serine 31 coordinates ATP.

The protein belongs to the tRNA(Ile)-lysidine synthase family.

It is found in the cytoplasm. It carries out the reaction cytidine(34) in tRNA(Ile2) + L-lysine + ATP = lysidine(34) in tRNA(Ile2) + AMP + diphosphate + H(+). Functionally, ligates lysine onto the cytidine present at position 34 of the AUA codon-specific tRNA(Ile) that contains the anticodon CAU, in an ATP-dependent manner. Cytidine is converted to lysidine, thus changing the amino acid specificity of the tRNA from methionine to isoleucine. This is tRNA(Ile)-lysidine synthase from Parabacteroides distasonis (strain ATCC 8503 / DSM 20701 / CIP 104284 / JCM 5825 / NCTC 11152).